Reading from the N-terminus, the 309-residue chain is MPDLESIVKDIAAEMRARPDRGAVASYIPELARVDAQGFGLVVIDGEGRVAAGGDADTPFSIQSISKVFTLTLALGMVGDRLWRRVGREPSGSPFNSIVQLEREHGIPRNPFINAGAIAVTDLILSGHQPREALGEILRFMQFVAQDDSITIDERVAASEKRTGFRNAALANYMRSFDVIENPVDYTLGVYFHHCAIAMTCRQLATAGLFLAYSGHHPLAGHSVISAERARRINAIMLTCGHYDGSGDFAYRVGLPGKSGVGGGILAVAPGKASICVWSPGLDAAGNSHLGRIALEMLVKRTGWSIFGV.

Residues Ser-64, Asn-114, Glu-160, Asn-167, Tyr-191, Tyr-243, and Val-261 each coordinate substrate.

The protein belongs to the glutaminase family. As to quaternary structure, homotetramer.

It carries out the reaction L-glutamine + H2O = L-glutamate + NH4(+). The sequence is that of Glutaminase from Methylorubrum extorquens (strain CM4 / NCIMB 13688) (Methylobacterium extorquens).